Reading from the N-terminus, the 475-residue chain is MAIKISDAPFSKRVEKGLQDGFMRQAVSSAQERLKTSKGSAEKELGNWEEWRTLAEEIRSHTLNHIDFYLHQLSENVEKAGGHVYFAQTAEEANQYIKEIVSSKEAQKVVKSKSMVTEEISMNKALEDIGCEVIETDLGEYILQIDDHDPPSHIVAPALHKNKEQIRDTFKARKGYTKSENPQELTLFAREQLRKEFLSADVGITGCNFAVAESGSISLVTNEGNARLATALPKTHIAVMGMERIVPTWEELDILVSMLCRSAVGQKLTSYVTGLTGPREDGDADGPEEFHLVIVDNGRSNILGTEFQAALHCIRCAACINVCPVYRHVGGHSYGSIYPGPIGAVLTPLLEGYEDHKELPYASSLCAACTDACPVKIPLHELLIKHRRVIAEQKRTARTEALAMKGFGIGASSPMLYKAGTKVVPFLLFPFVKDGAIPKGPGPLKGWTDVRHLPAPAKERFRDWFKARQKEGAHD.

4Fe-4S ferredoxin-type domains lie at G304–Y334 and Y353–L382. C313, C316, C319, C323, C366, C369, and C373 together coordinate [4Fe-4S] cluster.

The protein belongs to the LutB/YkgF family.

Its function is as follows. Is involved in L-lactate degradation and allows cells to grow with lactate as the sole carbon source. Has probably a role as an electron transporter during oxidation of L-lactate. This Shouchella clausii (strain KSM-K16) (Alkalihalobacillus clausii) protein is Lactate utilization protein B.